A 269-amino-acid chain; its full sequence is Formamidopyrimidine-DNA glycosylase (269 aa).

P2 serves as the catalytic Schiff-base intermediate with DNA. E3 functions as the Proton donor in the catalytic mechanism. K57 acts as the Proton donor; for beta-elimination activity in catalysis. The DNA site is built by H90, R109, and K150. Residues 235-269 form an FPG-type zinc finger; that stretch reads QVYGKGGKPCPRCDNPLSEMKIGQRASVFCSECQK. R259 serves as the catalytic Proton donor; for delta-elimination activity.

The protein belongs to the FPG family. Monomer. Zn(2+) is required as a cofactor.

The catalysed reaction is Hydrolysis of DNA containing ring-opened 7-methylguanine residues, releasing 2,6-diamino-4-hydroxy-5-(N-methyl)formamidopyrimidine.. The enzyme catalyses 2'-deoxyribonucleotide-(2'-deoxyribose 5'-phosphate)-2'-deoxyribonucleotide-DNA = a 3'-end 2'-deoxyribonucleotide-(2,3-dehydro-2,3-deoxyribose 5'-phosphate)-DNA + a 5'-end 5'-phospho-2'-deoxyribonucleoside-DNA + H(+). In terms of biological role, involved in base excision repair of DNA damaged by oxidation or by mutagenic agents. Acts as a DNA glycosylase that recognizes and removes damaged bases. Has a preference for oxidized purines, such as 7,8-dihydro-8-oxoguanine (8-oxoG). Has AP (apurinic/apyrimidinic) lyase activity and introduces nicks in the DNA strand. Cleaves the DNA backbone by beta-delta elimination to generate a single-strand break at the site of the removed base with both 3'- and 5'-phosphates. This Photobacterium profundum (strain SS9) protein is Formamidopyrimidine-DNA glycosylase.